The sequence spans 389 residues: Xylose isomerase (389 aa).

Catalysis depends on residues His-54 and Asp-57. Mg(2+)-binding residues include Glu-181, Glu-217, His-220, Asp-245, Asp-255, Asp-257, and Asp-287.

This sequence belongs to the xylose isomerase family. As to quaternary structure, homotetramer. It depends on Mg(2+) as a cofactor.

It is found in the cytoplasm. The catalysed reaction is alpha-D-xylose = alpha-D-xylulofuranose. Involved in D-xylose catabolism. The chain is Xylose isomerase (xylA) from Streptomyces violaceusniger.